A 1123-amino-acid polypeptide reads, in one-letter code: Telomerase reverse transcriptase (1123 aa).

2 disordered regions span residues 191 to 242 and 410 to 439; these read ENKR…KTTK and GTTS…PKCP. Residues 201–210 are compositionally biased toward polar residues; that stretch reads QPPTKRQWLS. The Reverse transcriptase domain occupies 596–929; that stretch reads LVDDAEAESS…PFVRWTGLLI (334 aa). Mg(2+) contacts are provided by Asp-691, Asp-860, and Asp-861.

The protein belongs to the reverse transcriptase family. Telomerase subfamily. As to quaternary structure, component of the telomerase ribonucleoprotein complex. Interacts with POT1A.

The protein localises to the nucleus. It localises to the chromosome. Its subcellular location is the telomere. The catalysed reaction is DNA(n) + a 2'-deoxyribonucleoside 5'-triphosphate = DNA(n+1) + diphosphate. Functionally, telomerase is a ribonucleoprotein enzyme essential for the replication of chromosome termini in most eukaryotes. It elongates telomeres. It is a reverse transcriptase that adds simple sequence repeats to chromosome ends by copying a template sequence within the RNA component of the enzyme. Required to prevent genome instability induced by breakage-fusion-bridge (BFB) cycles. Can extend completely non-telomeric sequences using RNA template in vitro. This is Telomerase reverse transcriptase (TERT) from Arabidopsis thaliana (Mouse-ear cress).